The primary structure comprises 671 residues: Alpha-1,4-glucan:maltose-1-phosphate maltosyltransferase (671 aa).

Residues K252, Q312, and D347 each contribute to the alpha-maltose 1-phosphate site. D382 functions as the Nucleophile in the catalytic mechanism. N383 provides a ligand contact to alpha-maltose 1-phosphate. E411 functions as the Proton donor in the catalytic mechanism. Residue 521–522 participates in alpha-maltose 1-phosphate binding; it reads KY.

The protein belongs to the glycosyl hydrolase 13 family. GlgE subfamily. As to quaternary structure, homodimer.

The enzyme catalyses alpha-maltose 1-phosphate + [(1-&gt;4)-alpha-D-glucosyl](n) = [(1-&gt;4)-alpha-D-glucosyl](n+2) + phosphate. Functionally, maltosyltransferase that uses maltose 1-phosphate (M1P) as the sugar donor to elongate linear or branched alpha-(1-&gt;4)-glucans. Is involved in a branched alpha-glucan biosynthetic pathway from trehalose, together with TreS, Mak and GlgB. The polypeptide is Alpha-1,4-glucan:maltose-1-phosphate maltosyltransferase (Corynebacterium pseudotuberculosis (strain 1002)).